The following is a 447-amino-acid chain: ATP-dependent protease ATPase subunit HslU (447 aa).

Residues isoleucine 18, 60-65, aspartate 259, glutamate 325, and arginine 397 each bind ATP; that span reads GVGKTE.

Belongs to the ClpX chaperone family. HslU subfamily. As to quaternary structure, a double ring-shaped homohexamer of HslV is capped on each side by a ring-shaped HslU homohexamer. The assembly of the HslU/HslV complex is dependent on binding of ATP.

Its subcellular location is the cytoplasm. ATPase subunit of a proteasome-like degradation complex; this subunit has chaperone activity. The binding of ATP and its subsequent hydrolysis by HslU are essential for unfolding of protein substrates subsequently hydrolyzed by HslV. HslU recognizes the N-terminal part of its protein substrates and unfolds these before they are guided to HslV for hydrolysis. In Burkholderia pseudomallei (strain K96243), this protein is ATP-dependent protease ATPase subunit HslU.